The primary structure comprises 207 residues: Large ribosomal subunit protein uL4 (207 aa).

Positions 45–89 are disordered; the sequence is RQGTHKVKTRSEVRGGGRKPWRQKGTGRARQGSIRSPQWRGGGTV. Residues 60–71 show a composition bias toward basic residues; that stretch reads GGRKPWRQKGTG.

It belongs to the universal ribosomal protein uL4 family. Part of the 50S ribosomal subunit.

Functionally, one of the primary rRNA binding proteins, this protein initially binds near the 5'-end of the 23S rRNA. It is important during the early stages of 50S assembly. It makes multiple contacts with different domains of the 23S rRNA in the assembled 50S subunit and ribosome. Forms part of the polypeptide exit tunnel. This chain is Large ribosomal subunit protein uL4, found in Bacillus anthracis (strain A0248).